The sequence spans 60 residues: Small, acid-soluble spore protein H 1 (60 aa).

The segment at 39 to 60 is disordered; the sequence is IHPLDNPNQKQSVPVASLEEHS.

The protein belongs to the SspH family.

Its subcellular location is the spore core. The protein is Small, acid-soluble spore protein H 1 of Geobacillus kaustophilus (strain HTA426).